The sequence spans 179 residues: Large ribosomal subunit protein uL6 (179 aa).

This sequence belongs to the universal ribosomal protein uL6 family. As to quaternary structure, part of the 50S ribosomal subunit.

Its function is as follows. This protein binds to the 23S rRNA, and is important in its secondary structure. It is located near the subunit interface in the base of the L7/L12 stalk, and near the tRNA binding site of the peptidyltransferase center. This Bifidobacterium animalis subsp. lactis (strain AD011) protein is Large ribosomal subunit protein uL6.